A 1151-amino-acid polypeptide reads, in one-letter code: Trafficking protein particle complex subunit 9 (1151 aa).

It belongs to the NIBP family. Part of the multisubunit TRAPP (transport protein particle) complex.

It localises to the golgi apparatus. The protein resides in the cis-Golgi network. Its subcellular location is the endoplasmic reticulum. It is found in the cytoplasm. Its function is as follows. Functions as an activator of NF-kappa-B through increased phosphorylation of the IKK complex. May function in neuronal cells differentiation. May play a role in vesicular transport from endoplasmic reticulum to Golgi. This is Trafficking protein particle complex subunit 9 (trappc9) from Xenopus laevis (African clawed frog).